The following is a 245-amino-acid chain: Aquaporin SIP1-1 (245 aa).

2 consecutive transmembrane segments (helical) span residues 14–34 (AVVTFLWVLCASALGASTAAV) and 55–75 (LLSVLLFTFDLLCGALGGASF). The NPA 1 motif lies at 76 to 78 (NPT). The next 3 helical transmembrane spans lie at 100-120 (FPAQAAGAVGGALAISELMPA), 138-158 (GALAEGVLTFVITLTVLWVIV), and 164-184 (VILKTLLLSTSIVSVILAGAE). Positions 191–193 (NPA) match the NPA 2 motif. The chain crosses the membrane as a helical span at residues 213–233 (VYWICPFIGAMLAGWIFRVVF).

It belongs to the MIP/aquaporin (TC 1.A.8) family. SIP (TC 1.A.8.10) subfamily.

It is found in the membrane. In terms of biological role, aquaporins facilitate the transport of water and small neutral solutes across cell membranes. The polypeptide is Aquaporin SIP1-1 (SIP1-1) (Zea mays (Maize)).